The chain runs to 252 residues: 5'-nucleotidase SurE (252 aa).

4 residues coordinate a divalent metal cation: Asp8, Asp9, Ser42, and Asn94.

It belongs to the SurE nucleotidase family. The cofactor is a divalent metal cation.

The protein resides in the cytoplasm. It carries out the reaction a ribonucleoside 5'-phosphate + H2O = a ribonucleoside + phosphate. Functionally, nucleotidase that shows phosphatase activity on nucleoside 5'-monophosphates. The sequence is that of 5'-nucleotidase SurE from Ehrlichia ruminantium (strain Gardel).